A 170-amino-acid chain; its full sequence is Alpha-crystallin A chain (170 aa).

Position 1 is an N-acetylmethionine (Met1). Residues 1–63 (MDVTIQHPWF…RTALDSGISE (63 aa)) are required for complex formation with BFSP1 and BFSP2. Gln6 carries the deamidated glutamine; partial modification. At Ser45 the chain carries Phosphoserine. At Gln50 the chain carries Deamidated glutamine; partial. The sHSP domain maps to 52-161 (LFRTALDSGI…GERTIPVSRE (110 aa)). Lys99 carries the N6-acetyllysine modification. His100 provides a ligand contact to Zn(2+). Position 101 is a deamidated asparagine; partial (Asn101). Residues Glu102, His107, and His151 each contribute to the Zn(2+) site. The interval 144–170 (PKLVDPSHGERTIPVSREEKPSSAPSS) is disordered. Basic and acidic residues predominate over residues 148–164 (DPSHGERTIPVSREEKP). Ser159 carries O-linked (GlcNAc) serine glycosylation.

Belongs to the small heat shock protein (HSP20) family. Heteromer composed of three CRYAA and one CRYAB subunits. Inter-subunit bridging via zinc ions enhances stability, which is crucial as there is no protein turn over in the lens. Can also form homodimers and homotetramers (dimers of dimers) which serve as the building blocks of homooligomers. Within homooligomers, the zinc-binding motif is created from residues of 3 different molecules. His-100 and Glu-102 from one molecule are ligands of the zinc ion, and His-107 and His-151 residues from additional molecules complete the site with tetrahedral coordination geometry. Part of a complex required for lens intermediate filament formation composed of BFSP1, BFSP2 and CRYAA. In terms of processing, acetylation at Lys-99 may increase chaperone activity. Post-translationally, undergoes age-dependent proteolytical cleavage at the C-terminus.

The protein resides in the cytoplasm. The protein localises to the nucleus. Functionally, contributes to the transparency and refractive index of the lens. Acts as a chaperone, preventing aggregation of various proteins under a wide range of stress conditions. Required for the correct formation of lens intermediate filaments as part of a complex composed of BFSP1, BFSP2 and CRYAA. This chain is Alpha-crystallin A chain (CRYAA), found in Tamandua mexicana (Northern Tamandua).